The primary structure comprises 293 residues: ATP synthase subunit a (293 aa).

The next 6 helical transmembrane spans lie at 40 to 60 (DSLF…WLAA), 98 to 118 (FVAP…ALDL), 151 to 171 (DLNV…YYGI), 188 to 208 (FHAH…LNLI), 225 to 245 (MFAG…WTGF), and 264 to 284 (AIFH…LTLV).

The protein belongs to the ATPase A chain family. In terms of assembly, F-type ATPases have 2 components, CF(1) - the catalytic core - and CF(0) - the membrane proton channel. CF(1) has five subunits: alpha(3), beta(3), gamma(1), delta(1), epsilon(1). CF(0) has three main subunits: a(1), b(2) and c(9-12). The alpha and beta chains form an alternating ring which encloses part of the gamma chain. CF(1) is attached to CF(0) by a central stalk formed by the gamma and epsilon chains, while a peripheral stalk is formed by the delta and b chains.

The protein resides in the cell inner membrane. Functionally, key component of the proton channel; it plays a direct role in the translocation of protons across the membrane. This Bordetella avium (strain 197N) protein is ATP synthase subunit a.